A 559-amino-acid polypeptide reads, in one-letter code: Serine/threonine-protein kinase VRK1 (559 aa).

Positions 32 to 388 (YIVGKQFATG…EDDDEEEEVI (357 aa)) constitute a Protein kinase domain. ATP contacts are provided by residues 38 to 46 (FATGGFGRI) and lysine 61. The active-site Proton acceptor is the aspartate 167. Disordered stretches follow at residues 315–419 (EAAQ…ATSD) and 448–559 (SSCE…SSEV). Composition is skewed to polar residues over residues 405–418 (RSFN…TATS) and 449–460 (SCESQYESNEPG). Residues 533–542 (TSARYQEKRA) are compositionally biased toward basic and acidic residues. Residues 545-559 (NTKPTFDDSSCSSEV) show a composition bias toward polar residues.

Belongs to the protein kinase superfamily. CK1 Ser/Thr protein kinase family. VRK subfamily. Autophosphorylates in vitro.

It is found in the nucleus. Its subcellular location is the cytoplasm. The protein localises to the cajal body. The enzyme catalyses L-seryl-[protein] + ATP = O-phospho-L-seryl-[protein] + ADP + H(+). The catalysed reaction is L-threonyl-[protein] + ATP = O-phospho-L-threonyl-[protein] + ADP + H(+). Functionally, serine/threonine kinase that phosphorylates baf-1, thus regulating the association of baf-1 with chromatin and nuclear membrane proteins during nuclear envelope formation. May act through the egl-17 signaling pathway. Essential in hermaphrodites for formation of the vulva, uterus, and uterine seam cells and for development and maintenance of the somatic gonad and thus the germ line. Acts to prevent cep-1 from triggering an inappropriate cell cycle arrest, thereby promoting germ cell proliferation. Regulates anchor cell polarity and the timing of anchor cell invasion through the basement membranes separating vulval and somatic gonadal cells during the L3 larval stage. This Caenorhabditis briggsae protein is Serine/threonine-protein kinase VRK1.